We begin with the raw amino-acid sequence, 436 residues long: UDP-N-acetylglucosamine 1-carboxyvinyltransferase 1 (436 aa).

22 to 23 lines the phosphoenolpyruvate pocket; sequence KN. Arg-93 is a binding site for UDP-N-acetyl-alpha-D-glucosamine. Catalysis depends on Cys-117, which acts as the Proton donor. The residue at position 117 (Cys-117) is a 2-(S-cysteinyl)pyruvic acid O-phosphothioketal. UDP-N-acetyl-alpha-D-glucosamine is bound by residues 122–126, Asp-306, and Val-328; that span reads RPIDQ.

This sequence belongs to the EPSP synthase family. MurA subfamily.

The protein resides in the cytoplasm. The catalysed reaction is phosphoenolpyruvate + UDP-N-acetyl-alpha-D-glucosamine = UDP-N-acetyl-3-O-(1-carboxyvinyl)-alpha-D-glucosamine + phosphate. It participates in cell wall biogenesis; peptidoglycan biosynthesis. In terms of biological role, cell wall formation. Adds enolpyruvyl to UDP-N-acetylglucosamine. This is UDP-N-acetylglucosamine 1-carboxyvinyltransferase 1 from Bacillus licheniformis (strain ATCC 14580 / DSM 13 / JCM 2505 / CCUG 7422 / NBRC 12200 / NCIMB 9375 / NCTC 10341 / NRRL NRS-1264 / Gibson 46).